Here is a 331-residue protein sequence, read N- to C-terminus: Histone-lysine N-methyltransferase, H3 lysine-9 specific dim-5 (331 aa).

Positions 77-159 constitute a Pre-SET domain; it reads VGCSCASDEE…DCPNRVVERG (83 aa). 9 residues coordinate Zn(2+): cysteine 79, cysteine 81, cysteine 87, cysteine 92, cysteine 94, cysteine 141, cysteine 145, cysteine 147, and cysteine 151. The SET domain occupies 162 to 297; that stretch reads VPLQIFRTKD…KGTELTFDYV (136 aa). S-adenosyl-L-methionine is bound by residues 172 to 174, aspartate 215, tyrosine 217, arginine 251, and 254 to 255; these read RGW and NH. 4 residues coordinate Zn(2+): cysteine 257, cysteine 319, cysteine 321, and cysteine 326. The Post-SET domain occupies 315 to 331; that stretch reads EMTKCLCGTAKCRGYLW.

This sequence belongs to the class V-like SAM-binding methyltransferase superfamily. Histone-lysine methyltransferase family. Suvar3-9 subfamily.

The protein resides in the nucleus. The protein localises to the chromosome. The enzyme catalyses L-lysyl(9)-[histone H3] + 3 S-adenosyl-L-methionine = N(6),N(6),N(6)-trimethyl-L-lysyl(9)-[histone H3] + 3 S-adenosyl-L-homocysteine + 3 H(+). In terms of biological role, histone methyltransferase that specifically trimethylates histone H3 to form H3K9me3. H3K9me3 marks chromatin regions for DNA methylation. Dim-5 recognizes Arg-8 to Gly-12 of the H3 tail with Thr-11 and Gly-12 being the most important specificity determinants, the recognition of whcih is important to distinguish H3K9 from H3K27 and H4K20. The chain is Histone-lysine N-methyltransferase, H3 lysine-9 specific dim-5 (dim-5) from Neurospora crassa (strain ATCC 24698 / 74-OR23-1A / CBS 708.71 / DSM 1257 / FGSC 987).